The chain runs to 367 residues: Chorismate synthase (367 aa).

Residue Arg48 participates in NADP(+) binding. FMN is bound by residues 125-127 (RSS), Gly284, 299-303 (KPTPS), and Arg325.

It belongs to the chorismate synthase family. As to quaternary structure, homotetramer. FMNH2 is required as a cofactor.

The catalysed reaction is 5-O-(1-carboxyvinyl)-3-phosphoshikimate = chorismate + phosphate. It participates in metabolic intermediate biosynthesis; chorismate biosynthesis; chorismate from D-erythrose 4-phosphate and phosphoenolpyruvate: step 7/7. Functionally, catalyzes the anti-1,4-elimination of the C-3 phosphate and the C-6 proR hydrogen from 5-enolpyruvylshikimate-3-phosphate (EPSP) to yield chorismate, which is the branch point compound that serves as the starting substrate for the three terminal pathways of aromatic amino acid biosynthesis. This reaction introduces a second double bond into the aromatic ring system. This is Chorismate synthase from Lachnoclostridium phytofermentans (strain ATCC 700394 / DSM 18823 / ISDg) (Clostridium phytofermentans).